A 184-amino-acid chain; its full sequence is Peptide deformylase (184 aa).

Fe cation is bound by residues C111 and H154. Residue E155 is part of the active site. H158 provides a ligand contact to Fe cation.

Belongs to the polypeptide deformylase family. Fe(2+) is required as a cofactor.

The catalysed reaction is N-terminal N-formyl-L-methionyl-[peptide] + H2O = N-terminal L-methionyl-[peptide] + formate. In terms of biological role, removes the formyl group from the N-terminal Met of newly synthesized proteins. Requires at least a dipeptide for an efficient rate of reaction. N-terminal L-methionine is a prerequisite for activity but the enzyme has broad specificity at other positions. In Lactobacillus helveticus (strain DPC 4571), this protein is Peptide deformylase.